A 388-amino-acid chain; its full sequence is Deoxyuridine 5'-triphosphate nucleotidohydrolase (388 aa).

Basic and acidic residues predominate over residues 77–88 (EEKYDKEQHPGE). Disordered stretches follow at residues 77–96 (EEKY…SPLP) and 336–388 (THTP…PRHP). Residues 351 to 363 (VDDDVDETEEDEK) show a composition bias toward acidic residues.

The protein belongs to the dUTPase family. Mg(2+) serves as cofactor.

It catalyses the reaction dUTP + H2O = dUMP + diphosphate + H(+). Its pathway is pyrimidine metabolism; dUMP biosynthesis; dUMP from dCTP (dUTP route): step 2/2. Involved in nucleotide metabolism: produces dUMP, the immediate precursor of thymidine nucleotides and decreases the intracellular concentration of dUTP to avoid uracil incorporation into viral DNA. The sequence is that of Deoxyuridine 5'-triphosphate nucleotidohydrolase from Homo sapiens (Human).